A 520-amino-acid chain; its full sequence is Autophagy-related protein 22 (520 aa).

A glycan (N-linked (GlcNAc...) asparagine) is linked at Asn-11. The next 4 membrane-spanning stretches (helical) occupy residues Ile-32–Thr-52, Phe-104–Ile-124, Asn-133–Tyr-153, and Tyr-158–Gly-178. Residue Asn-193 is glycosylated (N-linked (GlcNAc...) asparagine). 2 helical membrane passes run Gly-214–Lys-234 and Val-244–Leu-264. The N-linked (GlcNAc...) asparagine glycan is linked to Asn-280. Helical transmembrane passes span Val-316–Thr-336, Leu-350–Ile-370, Leu-386–Phe-406, Phe-415–Ser-435, Ile-454–Thr-474, and Ser-483–Val-503.

The protein belongs to the ATG22 family.

It is found in the vacuole membrane. Functionally, vacuolar effluxer which mediate the efflux of amino acids resulting from autophagic degradation. The release of autophagic amino acids allows the maintenance of protein synthesis and viability during nitrogen starvation. In Vanderwaltozyma polyspora (strain ATCC 22028 / DSM 70294 / BCRC 21397 / CBS 2163 / NBRC 10782 / NRRL Y-8283 / UCD 57-17) (Kluyveromyces polysporus), this protein is Autophagy-related protein 22 (ATG22).